We begin with the raw amino-acid sequence, 257 residues long: Leucine-rich repeat-containing protein 3 (257 aa).

The first 32 residues, 1 to 32 (MGPRGRQSPSATLAPSQGSCFFILFCLRLGAS), serve as a signal peptide directing secretion. Positions 33-64 (CPQACQCPDHAGAVAVHCSSRGLQEIPRDIPA) constitute an LRRNT domain. LRR repeat units follow at residues 65-86 (DTVLLKLDANRISRVPNGAFQH), 89-110 (QLRELDLSHNAIEAIGPAAFSG), and 114-135 (GLRLLDLSHNRIRRIPKDALGK). The region spanning 145–198 (NPLHCECALQEALWELKLDPDSVDEIACHTSAQEQFVGKPLIQVLDSGASFCST) is the LRRCT domain. The chain crosses the membrane as a helical span at residues 205–225 (VAMLVTMFGWFTMVIAYVVYY).

Belongs to the LRRC3 family.

The protein localises to the membrane. In Mus musculus (Mouse), this protein is Leucine-rich repeat-containing protein 3 (Lrrc3).